Reading from the N-terminus, the 879-residue chain is Paramyosin, long form (879 aa).

The interval 1 to 31 is nonhelical region; sequence MSSSQAVRSSKYSYRATSTGPGTADVNIEYI. The residue at position 18 (Ser-18) is a Phosphoserine. Positions 32 to 858 form a coiled coil; that stretch reads QDLSSLSRLE…IIRAKHRTFV (827 aa). Residues 859 to 879 form a nonhelical region region; it reads TTSTVPGSQVYIQETTRTITE.

The protein belongs to the paramyosin family. As to quaternary structure, heterodimer of two isoforms. In terms of processing, the more-acidic and less-abundant isoform is phosphorylated. Expressed in all larval and adult muscle tissues. Expression is five times higher in tubular than in fibrillar muscles.

The protein localises to the cytoplasm. Its subcellular location is the myofibril. Functionally, paramyosin is a major structural component of many thick filaments isolated from invertebrate muscles. The sequence is that of Paramyosin, long form (Prm) from Drosophila melanogaster (Fruit fly).